The sequence spans 60 residues: Homeobox protein EgHBX4 (60 aa).

A DNA-binding region (homeobox) is located at residues 1 to 60 (SRRERTIYTPEQLEAMEEVFGVNRYPDVSMREELASRLGINESKIQVWFKNRRAKLRNLE).

Belongs to the paired homeobox family. Bicoid subfamily.

The protein localises to the nucleus. The polypeptide is Homeobox protein EgHBX4 (HBX4) (Echinococcus granulosus (Hydatid tapeworm)).